Reading from the N-terminus, the 431-residue chain is Glutamate--tRNA ligase 1 (431 aa).

The 'HIGH' region motif lies at 6-16; the sequence is PSPTGDMHIGN. The 'KMSKS' region motif lies at 235–239; that stretch reads KMSKR. Residue Lys238 coordinates ATP.

This sequence belongs to the class-I aminoacyl-tRNA synthetase family. Glutamate--tRNA ligase type 1 subfamily. Monomer.

It is found in the cytoplasm. It carries out the reaction tRNA(Glu) + L-glutamate + ATP = L-glutamyl-tRNA(Glu) + AMP + diphosphate. In terms of biological role, catalyzes the attachment of glutamate to tRNA(Glu) in a two-step reaction: glutamate is first activated by ATP to form Glu-AMP and then transferred to the acceptor end of tRNA(Glu). The chain is Glutamate--tRNA ligase 1 from Campylobacter jejuni subsp. jejuni serotype O:6 (strain 81116 / NCTC 11828).